The sequence spans 345 residues: UDP-N-acetylenolpyruvoylglucosamine reductase (345 aa).

The region spanning Val-15–Lys-218 is the FAD-binding PCMH-type domain. Arg-161 is an active-site residue. Ser-230 acts as the Proton donor in catalysis. The active site involves Glu-327.

This sequence belongs to the MurB family. The cofactor is FAD.

It is found in the cytoplasm. It catalyses the reaction UDP-N-acetyl-alpha-D-muramate + NADP(+) = UDP-N-acetyl-3-O-(1-carboxyvinyl)-alpha-D-glucosamine + NADPH + H(+). The protein operates within cell wall biogenesis; peptidoglycan biosynthesis. Its function is as follows. Cell wall formation. The chain is UDP-N-acetylenolpyruvoylglucosamine reductase from Blochmanniella floridana.